Consider the following 257-residue polypeptide: Acetylglutamate kinase (257 aa).

Residues 41–42 (GG), Arg-63, and Asn-156 contribute to the substrate site.

Belongs to the acetylglutamate kinase family. ArgB subfamily.

It is found in the cytoplasm. It catalyses the reaction N-acetyl-L-glutamate + ATP = N-acetyl-L-glutamyl 5-phosphate + ADP. It functions in the pathway amino-acid biosynthesis; L-arginine biosynthesis; N(2)-acetyl-L-ornithine from L-glutamate: step 2/4. Catalyzes the ATP-dependent phosphorylation of N-acetyl-L-glutamate. The sequence is that of Acetylglutamate kinase from Geobacillus sp. (strain WCH70).